We begin with the raw amino-acid sequence, 240 residues long: Phosphoribosylaminoimidazole-succinocarboxamide synthase (240 aa).

Belongs to the SAICAR synthetase family.

It carries out the reaction 5-amino-1-(5-phospho-D-ribosyl)imidazole-4-carboxylate + L-aspartate + ATP = (2S)-2-[5-amino-1-(5-phospho-beta-D-ribosyl)imidazole-4-carboxamido]succinate + ADP + phosphate + 2 H(+). It participates in purine metabolism; IMP biosynthesis via de novo pathway; 5-amino-1-(5-phospho-D-ribosyl)imidazole-4-carboxamide from 5-amino-1-(5-phospho-D-ribosyl)imidazole-4-carboxylate: step 1/2. In Limosilactobacillus fermentum (strain NBRC 3956 / LMG 18251) (Lactobacillus fermentum), this protein is Phosphoribosylaminoimidazole-succinocarboxamide synthase.